The following is an 83-amino-acid chain: MLKKILLSLVVFYQRFISPLTPPTCRFYPTCSQYTREAIEYHGALKGLYLGVRRILKCHPLHKGGFDPVPLKKDKNSKTTHHH.

Positions G64–H83 are disordered.

Belongs to the UPF0161 family.

It localises to the cell membrane. Its function is as follows. Could be involved in insertion of integral membrane proteins into the membrane. The protein is Putative membrane protein insertion efficiency factor of Staphylococcus epidermidis (strain ATCC 12228 / FDA PCI 1200).